The chain runs to 392 residues: CD2 homolog (392 aa).

The N-terminal stretch at 1 to 16 (MIIKLIFLICFKIVLS) is a signal peptide. The Extracellular segment spans residues 17 to 222 (IDNKTKFNET…YLDFFQVTSY (206 aa)). N-linked (GlcNAc...) asparagine; by host glycosylation is found at Asn39, Asn88, Asn92, Asn106, Asn148, Asn159, Asn183, Asn191, Asn198, and Asn204. Cystine bridges form between Cys137-Cys205 and Cys144-Cys188. A helical membrane pass occupies residues 223-243 (IFYMIIFIVTGITVSILISII). At 244 to 392 (TFLFIRKRKH…ISLIHVDRII (149 aa)) the chain is on the cytoplasmic side. The tract at residues 258 to 290 (ESPPPESNEEEQQCHHDTTSIHEPSPREPLLPK) is disordered. Over residues 269–283 (QQCHHDTTSIHEPSP) the composition is skewed to basic and acidic residues. Repeat copies occupy residues 319–324 (KPCPPP), 325–330 (KPCPPP), 331–336 (KPCPPP), 337–342 (KPCPPS), and 343–348 (KPCPPP). Positions 319 to 348 (KPCPPPKPCPPPKPCPPPKPCPPSKPCPPP) are 5 X 6 AA tandem repeats of K-P-C-[PRS]-[P]-[PS]. Positions 328 to 357 (PPPKPCPPPKPCPPSKPCPPPEPYSPPKPC) are disordered.

Belongs to the asfivirus CD2 homolog protein family. As to quaternary structure, both glycosylated and nonglycosylated forms interact (via C-terminus) with the host AP-1 complex. Post-translationally, cleaved into two fragments of 63 kDa and 26 kDa containing respectively the glycosylated N-terminus and the nonglycosylated C-terminus. A full-length 89-kDa glycosylated form also exists.

The protein localises to the host cell membrane. It localises to the virion membrane. The protein resides in the host Golgi apparatus. Functionally, may play an immunosuppressive role by inhibiting lymphocyte proliferation and subsequently facilitating viral replication and generalization of infection. Responsible for viral hemadsorption, which may help viral spread. Increases virus replication in the tick vector at the step of virus uptake or replication in the tick gut. May play a role in the host Golgi reorganization to yield viral factories. May play a role in host cell penetration. This Ornithodoros (relapsing fever ticks) protein is CD2 homolog.